The sequence spans 973 residues: ATP-dependent DNA helicase homolog RECG1, chloroplastic/mitochondrial (973 aa).

The sufficient for chloroplastic and mitochondrial trgeting stretch occupies residues 1-208 (MAAVTLSPCS…ATSEVEATSD (208 aa)). The disordered stretch occupies residues 174-200 (LLQNDDSSDPREDILDDGSSFTSKTAT). The Helicase ATP-binding domain occupies 536–725 (DLKRPVPMNR…LYGDISLTQI (190 aa)). An ATP-binding site is contributed by 549 to 556 (GDVGCGKT). A DEQQ box motif is present at residues 655–658 (DEQQ). The region spanning 746-904 (GIKEVYSMML…GFYLANIDLL (159 aa)) is the Helicase C-terminal domain.

It belongs to the helicase family. RecG subfamily. In terms of tissue distribution, expressed in most tissues, not seen in pollen, ovules or developing seeds.

The protein resides in the plastid. The protein localises to the chloroplast. It localises to the mitochondrion. It carries out the reaction Couples ATP hydrolysis with the unwinding of duplex DNA by translocating in the 3'-5' direction.. The enzyme catalyses ATP + H2O = ADP + phosphate + H(+). Functionally, plays a critical role in recombination and DNA repair. Helps process Holliday junction (HJ) intermediates to mature products by catalyzing branch migration. Has replication fork regression activity, unwinds stalled or blocked replication forks to make a HJ that can be resolved. Has a DNA unwinding activity characteristic of a DNA helicase with 3'-5' polarity. Plays a role in recombination surveillance and repair of double-stranded (ds)DNA breaks in the mitochondrion. May be able to dissociate D- and R-loops. Able to complement UV sensitivity of a recG deletion in E.coli. This is ATP-dependent DNA helicase homolog RECG1, chloroplastic/mitochondrial from Arabidopsis thaliana (Mouse-ear cress).